Consider the following 353-residue polypeptide: Photosystem II protein D1 (353 aa).

Thr-2 carries the post-translational modification N-acetylthreonine. Thr-2 is modified (phosphothreonine). Helical transmembrane passes span 29-46, 118-133, and 142-156; these read YIGW…TATS, HFLL…EWEL, and WIVV…AATA. His-118 is a binding site for chlorophyll a. Tyr-126 is a pheophytin a binding site. [CaMn4O5] cluster contacts are provided by Asp-170 and Glu-189. The chain crosses the membrane as a helical span at residues 197 to 218; it reads FHMLGVAGVFGGSLFSAMHGSL. His-198 contacts chlorophyll a. Residues His-215 and 264–265 each bind a quinone; that span reads SF. His-215 is a binding site for Fe cation. His-272 lines the Fe cation pocket. The helical transmembrane segment at 274 to 288 threads the bilayer; sequence FLAAWPVVGIWFTAL. [CaMn4O5] cluster contacts are provided by His-332, Glu-333, Asp-342, and Ala-344. A propeptide spanning residues 345-353 is cleaved from the precursor; sequence AVDAPSISG.

It belongs to the reaction center PufL/M/PsbA/D family. As to quaternary structure, PSII is composed of 1 copy each of membrane proteins PsbA, PsbB, PsbC, PsbD, PsbE, PsbF, PsbH, PsbI, PsbJ, PsbK, PsbL, PsbM, PsbT, PsbX, PsbY, PsbZ, Psb30/Ycf12, at least 3 peripheral proteins of the oxygen-evolving complex and a large number of cofactors. It forms dimeric complexes. Requires The D1/D2 heterodimer binds P680, chlorophylls that are the primary electron donor of PSII, and subsequent electron acceptors. It shares a non-heme iron and each subunit binds pheophytin, quinone, additional chlorophylls, carotenoids and lipids. D1 provides most of the ligands for the Mn4-Ca-O5 cluster of the oxygen-evolving complex (OEC). There is also a Cl(-1) ion associated with D1 and D2, which is required for oxygen evolution. The PSII complex binds additional chlorophylls, carotenoids and specific lipids. as cofactor. Post-translationally, tyr-161 forms a radical intermediate that is referred to as redox-active TyrZ, YZ or Y-Z. C-terminally processed by CTPA; processing is essential to allow assembly of the oxygen-evolving complex and thus photosynthetic growth.

It localises to the plastid. Its subcellular location is the chloroplast thylakoid membrane. The enzyme catalyses 2 a plastoquinone + 4 hnu + 2 H2O = 2 a plastoquinol + O2. Its function is as follows. Photosystem II (PSII) is a light-driven water:plastoquinone oxidoreductase that uses light energy to abstract electrons from H(2)O, generating O(2) and a proton gradient subsequently used for ATP formation. It consists of a core antenna complex that captures photons, and an electron transfer chain that converts photonic excitation into a charge separation. The D1/D2 (PsbA/PsbD) reaction center heterodimer binds P680, the primary electron donor of PSII as well as several subsequent electron acceptors. This chain is Photosystem II protein D1, found in Vicia faba (Broad bean).